Here is an 82-residue protein sequence, read N- to C-terminus: Beta-defensin 113 (82 aa).

An N-terminal signal peptide occupies residues 1–16; the sequence is MKILCIFLTFFFTVSC. 3 cysteine pairs are disulfide-bonded: Cys-35/Cys-61, Cys-42/Cys-56, and Cys-46/Cys-62.

It belongs to the beta-defensin family.

Its subcellular location is the secreted. Has antibacterial activity. The sequence is that of Beta-defensin 113 (DEFB113) from Pan troglodytes (Chimpanzee).